The chain runs to 139 residues: Putative nickel-responsive regulator (139 aa).

Histidine 79, histidine 90, histidine 92, and cysteine 98 together coordinate Ni(2+).

It belongs to the transcriptional regulatory CopG/NikR family. Ni(2+) is required as a cofactor.

In terms of biological role, transcriptional regulator. The chain is Putative nickel-responsive regulator from Geobacter sulfurreducens (strain ATCC 51573 / DSM 12127 / PCA).